The primary structure comprises 157 residues: Protein Smg (157 aa).

The protein belongs to the Smg family.

This Yersinia pestis (strain Pestoides F) protein is Protein Smg.